Reading from the N-terminus, the 490-residue chain is Alpha-galactosidase (490 aa).

Residue Phe4–Asp70 participates in NAD(+) binding. Residue Asn150 participates in substrate binding. Cys171 contributes to the Mn(2+) binding site. His172 serves as the catalytic Proton donor. Position 201 (His201) interacts with Mn(2+). The active-site Proton acceptor is the Tyr258.

Belongs to the glycosyl hydrolase 4 family. In terms of assembly, homodimer. The cofactor is Mn(2+). It depends on NAD(+) as a cofactor.

The enzyme catalyses Hydrolysis of terminal, non-reducing alpha-D-galactose residues in alpha-D-galactosides, including galactose oligosaccharides, galactomannans and galactolipids.. This is Alpha-galactosidase (melA) from Rhizobium meliloti (strain 1021) (Ensifer meliloti).